Consider the following 1077-residue polypeptide: Rap guanine nucleotide exchange factor 1 (1077 aa).

A Glycyl lysine isopeptide (Lys-Gly) (interchain with G-Cter in SUMO2) cross-link involves residue Leu57. Disordered stretches follow at residues 207–235 (IEKQGRPSPTSPVKPSSPASKPDGPAELP) and 248–300 (TGMS…PTRV). The span at 213–228 (PSPTSPVKPSSPASKP) shows a compositional bias: low complexity. Residues Ser281, Ser293, Ser314, Ser335, and Ser360 each carry the phosphoserine modification. Positions 281 to 292 (SPPPALPPKKRQ) match the SH3-binding motif. 2 disordered regions span residues 336–376 (GGSH…QCSR) and 411–494 (LSPL…EDLQ). Positions 358–371 (SKSDEQLSSLDRDS) are enriched in basic and acidic residues. An SH3-binding motif is present at residues 451-462 (DTPPALPEKKRR). The segment covering 484 to 494 (QYDNISGEDLQ) has biased composition (polar residues). Position 504 is a phosphotyrosine; by HCK (Tyr504). 2 short sequence motifs (SH3-binding) span residues 538–549 (EKPPPLPEKKNK) and 606–617 (APPPALPPKQRQ). The disordered stretch occupies residues 600-670 (DSVQELAPPP…SEEEVDELSL (71 aa)). Residues 640-651 (KDSRDGSERAPK) show a composition bias toward basic and acidic residues. The segment covering 660–669 (QSEEEVDELS) has biased composition (acidic residues). The region spanning 688–810 (DGPDVRGGSG…LRKNILDKVD (123 aa)) is the N-terminal Ras-GEF domain. One can recognise a Ras-GEF domain in the interval 840–1064 (HSHEIAEQLT…WELSLKIKPR (225 aa)).

As to quaternary structure, interacts with HCK (via SH3-binding sites). Interacts with CRK (via SH3-binding sites). Phosphorylation at Tyr-504 enhances activity as Rap guanine nucleotide exchange factor. Ubiquitously expressed in adult and fetus. Expression is high in adult skeletal muscle and placenta and in fetal brain and heart. Low levels of expression in adult and fetal liver.

It localises to the early endosome. Functionally, guanine nucleotide-releasing protein that binds to SH3 domain of CRK and GRB2/ASH. Transduces signals from CRK to activate RAS. Involved in cell branching and adhesion mediated by BCAR1-CRK-RAPGEF1 signaling and activation of RAP1. Plays a role in the establishment of basal endothelial barrier function. Plays a role in nerve growth factor (NGF)-induced sustained activation of Rap1 and neurite outgrowth. In Homo sapiens (Human), this protein is Rap guanine nucleotide exchange factor 1 (RAPGEF1).